The following is a 317-amino-acid chain: Ataxin-3 homolog (317 aa).

Residues Ile7–Leu178 form the Josephin domain. Cys20 (nucleophile) is an active-site residue. The active-site Proton acceptor is His117. The active site involves Asn132. UIM domains lie at Ser219–Ser239 and Glu247–Gly264. A disordered region spans residues Arg254–Lys317. The span at Arg276 to Glu293 shows a compositional bias: polar residues. The span at Gln294–Lys317 shows a compositional bias: basic and acidic residues. The tract at residues Arg296 to Arg299 is interaction with cdc-48.1 and cdc-48.2.

In terms of assembly, forms a complex composed of deubiquitinating enzyme atx-3, adapter ubxn-5 and cdc-48.1. Forms a complex composed of deubiquitinating enzyme atx-3, E4 ubiquitin-protein ligase ufd-2 and cdc-48.1. Interacts (via RRDR motif) with cdc-48.1 (via N-terminus) and cdc-48.2 (via N-terminus); the interaction with cdc-48.1 is not required for atx-3 enzymatic activity. Interacts (via C-terminus) with ubxn-5. May interact with ned-8. Expressed in germline (at protein level). Expressed in spermatheca, pharynx, dorsal and ventral cords, some head neurons, hypodermis, body wall muscles and coelomocytes.

Its subcellular location is the cytoplasm. It localises to the nucleus. The protein localises to the nucleolus. The enzyme catalyses Thiol-dependent hydrolysis of ester, thioester, amide, peptide and isopeptide bonds formed by the C-terminal Gly of ubiquitin (a 76-residue protein attached to proteins as an intracellular targeting signal).. Its function is as follows. Acts as a chain editing deubiquitinating enzyme that binds and cleaves 'Lys-48'-linked polyubiquitin chains, with a preference for chains containing four or more ubiquitin molecules thereby modulating protein degradation by the ubiquitin-proteasome pathway. Probably by regulating the IGF-1-insulin-like pathway, regulates lifespan. Regulates germline DNA double-strand-break repair and apoptosis in response to DNA damage by recruiting E4 ubiquitin-protein ligase ufd-2 to DNA repair foci. Interacts with key regulators of transcription and represses transcription. Acts as a histone-binding protein that regulates transcription. In Caenorhabditis elegans, this protein is Ataxin-3 homolog (atx-3).